The chain runs to 121 residues: Flagellar protein FliT (121 aa).

The segment at 1-50 is required for homodimerization; the sequence is MNHAPHLYFAWQQLVEKSQLMLRLATEEQWDELIASEMAYVNAVQEIAHL. Positions 60 to 98 are fliD binding; sequence MQEQLRPMLRLILDNESKVKQLLQIRMDELAKLVGQSSV.

This sequence belongs to the FliT family. Homodimer. Interacts with FliD and FlhC.

It localises to the cytoplasm. The protein localises to the cytosol. Functionally, dual-function protein that regulates the transcription of class 2 flagellar operons and that also acts as an export chaperone for the filament-capping protein FliD. As a transcriptional regulator, acts as an anti-FlhDC factor; it directly binds FlhC, thus inhibiting the binding of the FlhC/FlhD complex to class 2 promoters, resulting in decreased expression of class 2 flagellar operons. As a chaperone, effects FliD transition to the membrane by preventing its premature polymerization, and by directing it to the export apparatus. This Escherichia coli O8 (strain IAI1) protein is Flagellar protein FliT.